The following is a 30-amino-acid chain: Sillucin (30 aa).

4 disulfide bridges follow: Cys2-Cys7, Cys12-Cys24, Cys13-Cys30, and Cys14-Cys21.

Its subcellular location is the secreted. Functionally, sillucin is an antimicrobial agent produced by the thermophilic fungus Rhizomucor pusillus in liquid culture; it is effective against Gram-positive bacteria at the level of RNA metabolism. The chain is Sillucin from Rhizomucor pusillus.